We begin with the raw amino-acid sequence, 205 residues long: GTP-binding protein rho3 (205 aa).

GTP is bound at residue 20–27 (GDGAAGKT). The short motif at 42 to 50 (YEPTIFENY) is the Effector region element. Residues 67–71 (DTAGQ) and 125–128 (LKCD) contribute to the GTP site. The residue at position 202 (Cys-202) is a Cysteine methyl ester. Cys-202 is lipidated: S-geranylgeranyl cysteine. Residues 203-205 (IIA) constitute a propeptide, removed in mature form.

It belongs to the small GTPase superfamily. Rho family. As to quaternary structure, interacts with for3. Palmitoylated by the erf2-erf4 complex.

It is found in the cell membrane. Its function is as follows. Involved in controlling cell shape and septation. Regulates cell separation by modulating the function of the exocyst complex. Involved in post-Golgi vesicle transport. Involved in driving sexual development in a palmitoylation-dependent manner. This chain is GTP-binding protein rho3 (rho3), found in Schizosaccharomyces pombe (strain 972 / ATCC 24843) (Fission yeast).